The sequence spans 600 residues: Probable translation initiation factor IF-2 (600 aa).

The 218-residue stretch at 10–227 folds into the tr-type G domain; sequence LRQPIVVVLG…LLAGLTQRYL (218 aa). Positions 19–26 are G1; the sequence is GHVDHGKT. 19–26 provides a ligand contact to GTP; sequence GHVDHGKT. The segment at 44 to 48 is G2; it reads EMTQE. The G3 stretch occupies residues 83 to 86; that stretch reads DTPG. GTP-binding positions include 83 to 87 and 137 to 140; these read DTPGH and NKID. The segment at 137–140 is G4; that stretch reads NKID. Residues 205 to 207 form a G5 region; sequence SAK.

Belongs to the TRAFAC class translation factor GTPase superfamily. Classic translation factor GTPase family. IF-2 subfamily.

Function in general translation initiation by promoting the binding of the formylmethionine-tRNA to ribosomes. Seems to function along with eIF-2. In Saccharolobus solfataricus (strain ATCC 35092 / DSM 1617 / JCM 11322 / P2) (Sulfolobus solfataricus), this protein is Probable translation initiation factor IF-2.